We begin with the raw amino-acid sequence, 487 residues long: Betaine aldehyde dehydrogenase (487 aa).

2 residues coordinate K(+): Ile27 and Asp93. 149 to 151 (GAW) provides a ligand contact to NAD(+). Lys161 acts as the Charge relay system in catalysis. Residues 175-178 (KPSE) and 228-231 (SVPT) each bind NAD(+). Position 243 (Leu243) interacts with K(+). The active-site Proton acceptor is Glu249. NAD(+) contacts are provided by Gly251, Cys283, and Glu384. The active-site Nucleophile is Cys283. Cys283 bears the Cysteine sulfenic acid (-SOH) mark. K(+) contacts are provided by Lys454 and Gly457. Glu461 functions as the Charge relay system in the catalytic mechanism.

Belongs to the aldehyde dehydrogenase family. In terms of assembly, dimer of dimers. K(+) serves as cofactor.

It carries out the reaction betaine aldehyde + NAD(+) + H2O = glycine betaine + NADH + 2 H(+). It participates in amine and polyamine biosynthesis; betaine biosynthesis via choline pathway; betaine from betaine aldehyde: step 1/1. Its function is as follows. Involved in the biosynthesis of the osmoprotectant glycine betaine. Catalyzes the irreversible oxidation of betaine aldehyde to the corresponding acid. This is Betaine aldehyde dehydrogenase from Brucella suis (strain ATCC 23445 / NCTC 10510).